Reading from the N-terminus, the 176-residue chain is Major non-capsid protein (176 aa).

This sequence belongs to the tenuiviruses NCP family.

It is found in the host cytoplasm. Its function is as follows. Induces the formation of large intracellular inclusion body, organized in amorphous and crystalline arrays. Presumably the main cause of the stripe disease observed in host. The protein is Major non-capsid protein of Rottboellia (Sorghum).